Reading from the N-terminus, the 143-residue chain is Large ribosomal subunit protein uL15 (143 aa).

The protein belongs to the universal ribosomal protein uL15 family. Part of the 50S ribosomal subunit.

Binds to the 23S rRNA. The polypeptide is Large ribosomal subunit protein uL15 (Methanococcus aeolicus (strain ATCC BAA-1280 / DSM 17508 / OCM 812 / Nankai-3)).